Reading from the N-terminus, the 180-residue chain is Large ribosomal subunit protein uL6 (180 aa).

It belongs to the universal ribosomal protein uL6 family. As to quaternary structure, part of the 50S ribosomal subunit.

This protein binds to the 23S rRNA, and is important in its secondary structure. It is located near the subunit interface in the base of the L7/L12 stalk, and near the tRNA binding site of the peptidyltransferase center. The protein is Large ribosomal subunit protein uL6 of Dictyoglomus thermophilum (strain ATCC 35947 / DSM 3960 / H-6-12).